A 521-amino-acid chain; its full sequence is Interleukin-9 receptor (521 aa).

An N-terminal signal peptide occupies residues 1–40 (MGLGRCIWEGWTLESEALRRDMGTWLLACICICTCVCLGV). Topologically, residues 41–270 (SVTGEGQGPR…GPLIPPWGWP (230 aa)) are extracellular. N-linked (GlcNAc...) asparagine glycosylation is found at asparagine 117 and asparagine 156. One can recognise a Fibronectin type-III domain in the interval 149–259 (PPSDLQSNIS…QPVCFQAPQR (111 aa)). The WSXWS motif signature appears at 245-249 (WSEWS). A helical membrane pass occupies residues 271 to 291 (GNTLVAVSIFLLLTGPTYLLF). At 292-521 (KLSPRVKRIF…VLSKARSWTF (230 aa)) the chain is on the cytoplasmic side. The Box 1 motif motif lies at 301–309 (FYQNVPSPA). Residues 413 to 439 (WAPTSLTRPAPPDSEGSRSSSSSSSSN) are disordered. The segment covering 429-439 (SRSSSSSSSSN) has biased composition (low complexity).

This sequence belongs to the type I cytokine receptor family. Type 4 subfamily. In terms of assembly, interacts with IL9.

It is found in the cell membrane. Its subcellular location is the secreted. Functionally, plays an important role in the immune response against parasites by acting as a receptor of IL9. In Homo sapiens (Human), this protein is Interleukin-9 receptor (IL9R).